The sequence spans 319 residues: Beta-xylosidase (319 aa).

Aspartate 14 functions as the Proton acceptor in the catalytic mechanism. Catalysis depends on glutamate 222, which acts as the Proton donor.

The protein belongs to the glycosyl hydrolase 43 family.

The enzyme catalyses Hydrolysis of (1-&gt;4)-beta-D-xylans, to remove successive D-xylose residues from the non-reducing termini.. Exoxylanase capable of acting on certain xylans and xylooligosaccharides. This Xylanibacter ruminicola (Prevotella ruminicola) protein is Beta-xylosidase (xynB).